An 811-amino-acid chain; its full sequence is Probable inorganic carbon transporter subunit DabA (811 aa).

Zn(2+) contacts are provided by C336, D338, H498, and C513.

Belongs to the inorganic carbon transporter (TC 9.A.2) DabA family. In terms of assembly, forms a complex with DabB. Zn(2+) serves as cofactor.

The protein resides in the cell inner membrane. Its function is as follows. Part of an energy-coupled inorganic carbon pump. This is Probable inorganic carbon transporter subunit DabA from Rhodospirillum centenum (strain ATCC 51521 / SW).